The chain runs to 39 residues: Photosystem II reaction center protein L (39 aa).

A helical transmembrane segment spans residues 18 to 38; that stretch reads SLYLGLLLVFVTGVLFSSYFF.

The protein belongs to the PsbL family. As to quaternary structure, PSII is composed of 1 copy each of membrane proteins PsbA, PsbB, PsbC, PsbD, PsbE, PsbF, PsbH, PsbI, PsbJ, PsbK, PsbL, PsbM, PsbT, PsbX, PsbY, PsbZ, Psb30/Ycf12, peripheral proteins PsbO, CyanoQ (PsbQ), PsbU, PsbV and a large number of cofactors. It forms dimeric complexes.

It is found in the cellular thylakoid membrane. One of the components of the core complex of photosystem II (PSII). PSII is a light-driven water:plastoquinone oxidoreductase that uses light energy to abstract electrons from H(2)O, generating O(2) and a proton gradient subsequently used for ATP formation. It consists of a core antenna complex that captures photons, and an electron transfer chain that converts photonic excitation into a charge separation. This subunit is found at the monomer-monomer interface and is required for correct PSII assembly and/or dimerization. The chain is Photosystem II reaction center protein L from Synechococcus sp. (strain RCC307).